The sequence spans 430 residues: Replication protein A 32 kDa subunit C (430 aa).

The segment at Met-14–Arg-46 is disordered. A compositionally biased stretch (low complexity) spans Ala-23–Ser-38. Residues Val-86–Ile-160 constitute a DNA-binding region (OB).

It belongs to the replication factor A protein 2 family. In terms of assembly, heterotrimer of RPA1, RPA2 and RPA3 (canonical replication protein A complex). Interacts with RPA1C and RPA3. Phosphorylated in a cell-cycle-dependent manner (from the S phase until mitosis). In response to DNA damage, recruited to DNA-repair nuclear foci, as a hypophosphorylated form.

It localises to the nucleus. In terms of biological role, component of the replication protein A complex (RPA) required for DNA recombination, repair and replication. The activity of RPA is mediated by single-stranded DNA binding and protein interactions. The sequence is that of Replication protein A 32 kDa subunit C (RPA2C) from Oryza sativa subsp. japonica (Rice).